The primary structure comprises 446 residues: Argininosuccinate lyase (446 aa).

This sequence belongs to the lyase 1 family. Argininosuccinate lyase subfamily.

The protein resides in the cytoplasm. The enzyme catalyses 2-(N(omega)-L-arginino)succinate = fumarate + L-arginine. Its pathway is amino-acid biosynthesis; L-arginine biosynthesis; L-arginine from L-ornithine and carbamoyl phosphate: step 3/3. The protein is Argininosuccinate lyase of Bacteroides thetaiotaomicron (strain ATCC 29148 / DSM 2079 / JCM 5827 / CCUG 10774 / NCTC 10582 / VPI-5482 / E50).